The chain runs to 334 residues: CRISPR-associated endonuclease Cas1 (334 aa).

Glu161, His226, and Glu241 together coordinate Mn(2+).

This sequence belongs to the CRISPR-associated endonuclease Cas1 family. In terms of assembly, homodimer, forms a heterotetramer with a Cas2 homodimer. Requires Mg(2+) as cofactor. It depends on Mn(2+) as a cofactor.

In terms of biological role, CRISPR (clustered regularly interspaced short palindromic repeat), is an adaptive immune system that provides protection against mobile genetic elements (viruses, transposable elements and conjugative plasmids). CRISPR clusters contain spacers, sequences complementary to antecedent mobile elements, and target invading nucleic acids. CRISPR clusters are transcribed and processed into CRISPR RNA (crRNA). Acts as a dsDNA endonuclease. Involved in the integration of spacer DNA into the CRISPR cassette. The protein is CRISPR-associated endonuclease Cas1 of Methanothermobacter thermautotrophicus (strain ATCC 29096 / DSM 1053 / JCM 10044 / NBRC 100330 / Delta H) (Methanobacterium thermoautotrophicum).